We begin with the raw amino-acid sequence, 353 residues long: MTAILERRESESLWGRFCNWITSTENRLYIGWFGVLMIPTLLTATSVFIIAFIAAPPVDIDGIREPVSGSLLYGNNIISGAIIPTSAAIGLHFYPIWEAASVDEWLYNGGPYELIVLHFLLGVACYMGREWELSFRLGMRPWIAVAYSAPVAAATAVFLIYPIGQGSFSDGMPLGISGTFNFMIVFQAEHNILMHPFHMLGVAGVFGGSLFSAMHGSLVTSSLIRETTENESANEGYRLGQEEETYNIVAAHGYFGRLIFQYASFNNSRSLHFFLAAWPVVGIWFTALGISTMAFNLNGFNFNQSVVDSQGRVINTWADIINRANLGMEVMHERNAHNLPLDLAAIEAPSTNG.

Threonine 2 carries the N-acetylthreonine modification. Threonine 2 is modified (phosphothreonine). 3 helical membrane passes run 29–46 (YIGWFGVLMIPTLLTATS), 118–133 (HFLLGVACYMGREWEL), and 142–156 (WIAVAYSAPVAAATA). Histidine 118 is a chlorophyll a binding site. Tyrosine 126 lines the pheophytin a pocket. [CaMn4O5] cluster-binding residues include aspartate 170 and glutamate 189. A helical transmembrane segment spans residues 197–218 (FHMLGVAGVFGGSLFSAMHGSL). Histidine 198 contributes to the chlorophyll a binding site. Residues histidine 215 and 264 to 265 (SF) each bind a quinone. Position 215 (histidine 215) interacts with Fe cation. Histidine 272 is a binding site for Fe cation. A helical membrane pass occupies residues 274 to 288 (FLAAWPVVGIWFTAL). [CaMn4O5] cluster-binding residues include histidine 332, glutamate 333, aspartate 342, and alanine 344. Positions 345–353 (AIEAPSTNG) are excised as a propeptide.

This sequence belongs to the reaction center PufL/M/PsbA/D family. As to quaternary structure, PSII is composed of 1 copy each of membrane proteins PsbA, PsbB, PsbC, PsbD, PsbE, PsbF, PsbH, PsbI, PsbJ, PsbK, PsbL, PsbM, PsbT, PsbX, PsbY, PsbZ, Psb30/Ycf12, at least 3 peripheral proteins of the oxygen-evolving complex and a large number of cofactors. It forms dimeric complexes. It depends on The D1/D2 heterodimer binds P680, chlorophylls that are the primary electron donor of PSII, and subsequent electron acceptors. It shares a non-heme iron and each subunit binds pheophytin, quinone, additional chlorophylls, carotenoids and lipids. D1 provides most of the ligands for the Mn4-Ca-O5 cluster of the oxygen-evolving complex (OEC). There is also a Cl(-1) ion associated with D1 and D2, which is required for oxygen evolution. The PSII complex binds additional chlorophylls, carotenoids and specific lipids. as a cofactor. Post-translationally, tyr-161 forms a radical intermediate that is referred to as redox-active TyrZ, YZ or Y-Z. In terms of processing, C-terminally processed by CTPA; processing is essential to allow assembly of the oxygen-evolving complex and thus photosynthetic growth.

The protein localises to the plastid. Its subcellular location is the chloroplast thylakoid membrane. The enzyme catalyses 2 a plastoquinone + 4 hnu + 2 H2O = 2 a plastoquinol + O2. In terms of biological role, photosystem II (PSII) is a light-driven water:plastoquinone oxidoreductase that uses light energy to abstract electrons from H(2)O, generating O(2) and a proton gradient subsequently used for ATP formation. It consists of a core antenna complex that captures photons, and an electron transfer chain that converts photonic excitation into a charge separation. The D1/D2 (PsbA/PsbD) reaction center heterodimer binds P680, the primary electron donor of PSII as well as several subsequent electron acceptors. This is Photosystem II protein D1 from Gossypium barbadense (Sea Island cotton).